The following is a 469-amino-acid chain: MNLMPRYRQVADNFAIEDRPSKVAAPQLLLWNDSLAKAFNINVVPELRASTFSGNEQQAIAAVALGYSGHQFGHFSPRLGDGRAHLLGAVEDAQNQLWDIQLKGSGATPYSRGGDGRCALGPAIREYIMSEAMQALGIKTTRCLAVVGSGETVYRNPPQPGAIVTRLASSHIRVGSFQYLATQGDVAGLKNLADLAIERHYPKIQATGPERYLAFLAAVIKNQVELVVSWMRVGFIHGVMNTDNTLVSGETIDYGPCAMMNSFDFDTVFSSIDKQGRYAFGNQPNIANWNCARLAESLIPLVNDDDEQAVALMTPIIDGFAEQFNVEFSAMWATKLGLAGTDTADKELIAELLQLLKEHQLDYTNTFDALTESLTGGMSIPEVLVQWAGKWQKRTDDRSYTVMRAANPRVIPRNHVIEKILSEYNKTGSSELLHEFMQVMHTPYENTDKLAKFQDAPSSDKEYYTFCGT.

ATP is bound by residues Gly-80, Gly-82, Arg-83, Lys-103, Asp-115, Gly-116, Arg-166, and Arg-173. Asp-243 serves as the catalytic Proton acceptor. Asn-244 and Asp-253 together coordinate Mg(2+). An ATP-binding site is contributed by Asp-253.

Belongs to the SELO family. Mg(2+) is required as a cofactor. Mn(2+) serves as cofactor.

It catalyses the reaction L-seryl-[protein] + ATP = 3-O-(5'-adenylyl)-L-seryl-[protein] + diphosphate. It carries out the reaction L-threonyl-[protein] + ATP = 3-O-(5'-adenylyl)-L-threonyl-[protein] + diphosphate. The catalysed reaction is L-tyrosyl-[protein] + ATP = O-(5'-adenylyl)-L-tyrosyl-[protein] + diphosphate. The enzyme catalyses L-histidyl-[protein] + UTP = N(tele)-(5'-uridylyl)-L-histidyl-[protein] + diphosphate. It catalyses the reaction L-seryl-[protein] + UTP = O-(5'-uridylyl)-L-seryl-[protein] + diphosphate. It carries out the reaction L-tyrosyl-[protein] + UTP = O-(5'-uridylyl)-L-tyrosyl-[protein] + diphosphate. In terms of biological role, nucleotidyltransferase involved in the post-translational modification of proteins. It can catalyze the addition of adenosine monophosphate (AMP) or uridine monophosphate (UMP) to a protein, resulting in modifications known as AMPylation and UMPylation. This Pseudoalteromonas translucida (strain TAC 125) protein is Protein nucleotidyltransferase YdiU.